The following is a 1034-amino-acid chain: Integrin alpha-V (1034 aa).

A signal peptide spans 1–19 (MAALRASLLLSCALTAARA). The Extracellular segment spans residues 20 to 978 (FNLDAERPAV…WGIQPQPMPV (959 aa)). 7 FG-GAP repeats span residues 21–86 (NLDA…RNCQ), 97–158 (DFAP…VEYA), 161–213 (RSTT…LAKY), 225–279 (QLAT…GKNM), 280–345 (SSMY…GGFQ), 346–403 (IAKL…GLNA), and 407–470 (RILE…VNPT). Residue asparagine 62 is glycosylated (N-linked (GlcNAc...) asparagine). 3 disulfide bridges follow: cysteine 77/cysteine 85, cysteine 126/cysteine 146, and cysteine 160/cysteine 173. 4 residues coordinate Ca(2+): aspartate 248, aspartate 252, isoleucine 254, and aspartate 256. 2 N-linked (GlcNAc...) asparagine glycosylation sites follow: asparagine 278 and asparagine 284. Ca(2+)-binding residues include aspartate 302, asparagine 304, aspartate 306, tyrosine 308, aspartate 310, aspartate 367, aspartate 369, aspartate 371, phenylalanine 373, aspartate 375, aspartate 431, aspartate 433, asparagine 435, tyrosine 437, and aspartate 439. Cystine bridges form between cysteine 479–cysteine 488 and cysteine 494–cysteine 551. Residues asparagine 540 and asparagine 601 are each glycosylated (N-linked (GlcNAc...) asparagine). 2 cysteine pairs are disulfide-bonded: cysteine 612–cysteine 618 and cysteine 684–cysteine 697. N-linked (GlcNAc...) asparagine glycans are attached at residues asparagine 690, asparagine 821, asparagine 837, and asparagine 860. Intrachain disulfides connect cysteine 838–cysteine 900 and cysteine 890–cysteine 895. Asparagine 931, asparagine 951, asparagine 959, and asparagine 966 each carry an N-linked (GlcNAc...) asparagine glycan. A helical membrane pass occupies residues 979–1002 (PVWVIILAVLAGLLLLAVLVLVMY). Residues 1003 to 1034 (RMGFFKRVRPPQEEQEREQLQPHENGEGTSEA) are Cytoplasmic-facing. A GFFKR motif motif is present at residues 1005–1009 (GFFKR). Over residues 1013 to 1028 (PQEEQEREQLQPHENG) the composition is skewed to basic and acidic residues. Residues 1013 to 1034 (PQEEQEREQLQPHENGEGTSEA) are disordered.

This sequence belongs to the integrin alpha chain family. Heterodimer of an alpha and a beta subunit. The alpha subunit is composed of a heavy and a light chain linked by a disulfide bond. Alpha-V (ITGAV) associates with either beta-1 (ITGB1), beta-3 (ITGB3), beta-5 (ITGB5), beta-6 (ITGB6) or beta-8 (ITGB8). Interacts with RAB25. Interacts with CIB1. Integrins ITGAV:ITGB3 and ITGAV:ITGB5 interact with FBLN5 (via N-terminus). ITGAV:ITGB3 and ITGAV:ITGB5 interact with CCN3. ITGAV:ITGB3 interacts with ADGRA2. ITGAV:ITGB3 interacts with FGF2; it is likely that FGF2 can simultaneously bind ITGAV:ITGB3 and FGF receptors. ITGAV:ITGB3 is found in a ternary complex with CX3CR1 and CX3CL1. ITGAV:ITGB3 is found in a ternary complex with NRG1 and ERBB3. ITGAV:ITGB3 is found in a ternary complex with FGF1 and FGFR1. ITGAV:ITGB3 is found in a ternary complex with IGF1 and IGF1R. ITGAV:ITGB3 interacts with IGF2. ITGAV:ITGB3 and ITGAV:ITGB6 interact with FBN1. ITGAV:ITGB3 interacts with CD9, CD81 and CD151 (via second extracellular domain). ITGAV:ITGB6 interacts with TGFB1.

Its subcellular location is the membrane. The protein resides in the cell junction. It localises to the focal adhesion. Functionally, the alpha-V (ITGAV) integrins are receptors for vitronectin, cytotactin, fibronectin, fibrinogen, laminin, matrix metalloproteinase-2, osteopontin, osteomodulin, prothrombin, thrombospondin, TGFB1 and vWF. They recognize the sequence R-G-D in a wide array of ligands. Alpha-V integrins may play a role in embryo implantation, angiogenesis and wound healing. ITGAV:ITGB3 binds to fractalkine (CX3CL1) and may act as its coreceptor in CX3CR1-dependent fractalkine signaling. ITGAV:ITGB3 binds to NRG1 (via EGF domain) and this binding is essential for NRG1-ERBB signaling. ITGAV:ITGB3 binds to FGF1 and this binding is essential for FGF1 signaling. ITGAV:ITGB3 binds to FGF2 and this binding is essential for FGF2 signaling. ITGAV:ITGB3 binds to IGF1 and this binding is essential for IGF1 signaling. ITGAV:ITGB3 binds to IGF2 and this binding is essential for IGF2 signaling. ITGAV:ITGB3 binds to IL1B and this binding is essential for IL1B signaling. ITGAV:ITGB3 binds to PLA2G2A via a site (site 2) which is distinct from the classical ligand-binding site (site 1) and this induces integrin conformational changes and enhanced ligand binding to site 1. ITGAV:ITGB3 and ITGAV:ITGB6 act as receptors for fibrillin-1 (FBN1) and mediate R-G-D-dependent cell adhesion to FBN1. Integrin alpha-V/beta-6 or alpha-V/beta-8 (ITGAV:ITGB6 or ITGAV:ITGB8) mediates R-G-D-dependent release of transforming growth factor beta-1 (TGF-beta-1) from regulatory Latency-associated peptide (LAP), thereby playing a key role in TGF-beta-1 activation. ITGAV:ITGB3 acts as a receptor for CD40LG. ITGAV:ITGB3 acts as a receptor for IBSP and promotes cell adhesion and migration to IBSP. This is Integrin alpha-V (ITGAV) from Gallus gallus (Chicken).